A 147-amino-acid chain; its full sequence is 3-hydroxyacyl-[acyl-carrier-protein] dehydratase FabZ (147 aa).

Residue His-48 is part of the active site.

This sequence belongs to the thioester dehydratase family. FabZ subfamily.

It localises to the cytoplasm. The catalysed reaction is a (3R)-hydroxyacyl-[ACP] = a (2E)-enoyl-[ACP] + H2O. Functionally, involved in unsaturated fatty acids biosynthesis. Catalyzes the dehydration of short chain beta-hydroxyacyl-ACPs and long chain saturated and unsaturated beta-hydroxyacyl-ACPs. The polypeptide is 3-hydroxyacyl-[acyl-carrier-protein] dehydratase FabZ (Aliarcobacter butzleri (strain RM4018) (Arcobacter butzleri)).